A 355-amino-acid chain; its full sequence is Myosin-binding protein H-like (355 aa).

Composition is skewed to polar residues over residues 1–16 and 31–41; these read META…SQRQ and TSHQQEAGSPS. Residues 1–41 form a disordered region; it reads METATTLEIASCSQRQVEAAADPADAKGPRTSHQQEAGSPS. S39 bears the Phosphoserine mark. Residues 46 to 140 enclose the Ig-like C2-type 1 domain; sequence PSIEEHPKIW…GGLQATATIN (95 aa). Residues 149–244 form the Fibronectin type-III domain; the sequence is PPQSIKLVDV…TADLAHIQKA (96 aa). The Ig-like C2-type 2 domain maps to 262–346; that stretch reads PKFTQPLADC…INALGEASVD (85 aa). C283 and C334 are oxidised to a cystine. An Omega-N-methylarginine modification is found at R322.

The protein belongs to the immunoglobulin superfamily. MyBP family. In terms of tissue distribution, expressed in the atria as well as in discrete puncta throughout the right ventricular wall and septum.

It localises to the cytoplasm. It is found in the myofibril. The protein resides in the sarcomere. In terms of biological role, myosin-binding protein which plays a role in cardiac function. Seems to regulate conduction in the atria and ventricular conduction systems. The sequence is that of Myosin-binding protein H-like from Mus musculus (Mouse).